A 156-amino-acid polypeptide reads, in one-letter code: Endoribonuclease YbeY (156 aa).

Zn(2+) is bound by residues histidine 122, histidine 126, and histidine 132.

The protein belongs to the endoribonuclease YbeY family. It depends on Zn(2+) as a cofactor.

The protein localises to the cytoplasm. In terms of biological role, single strand-specific metallo-endoribonuclease involved in late-stage 70S ribosome quality control and in maturation of the 3' terminus of the 16S rRNA. The chain is Endoribonuclease YbeY from Bacillus cereus (strain ZK / E33L).